The primary structure comprises 383 residues: Queuine tRNA-ribosyltransferase (383 aa).

Catalysis depends on Asp90, which acts as the Proton acceptor. Residues 90 to 94 (DSGGF), Asp144, Gln193, and Gly227 each bind substrate. The RNA binding stretch occupies residues 258 to 264 (GVGTPED). Asp277 (nucleophile) is an active-site residue. Residues 282–286 (TRNAR) are RNA binding; important for wobble base 34 recognition. Positions 315, 317, 320, and 346 each coordinate Zn(2+).

The protein belongs to the queuine tRNA-ribosyltransferase family. As to quaternary structure, homodimer. Within each dimer, one monomer is responsible for RNA recognition and catalysis, while the other monomer binds to the replacement base PreQ1. Zn(2+) is required as a cofactor.

It catalyses the reaction 7-aminomethyl-7-carbaguanine + guanosine(34) in tRNA = 7-aminomethyl-7-carbaguanosine(34) in tRNA + guanine. It participates in tRNA modification; tRNA-queuosine biosynthesis. Functionally, catalyzes the base-exchange of a guanine (G) residue with the queuine precursor 7-aminomethyl-7-deazaguanine (PreQ1) at position 34 (anticodon wobble position) in tRNAs with GU(N) anticodons (tRNA-Asp, -Asn, -His and -Tyr). Catalysis occurs through a double-displacement mechanism. The nucleophile active site attacks the C1' of nucleotide 34 to detach the guanine base from the RNA, forming a covalent enzyme-RNA intermediate. The proton acceptor active site deprotonates the incoming PreQ1, allowing a nucleophilic attack on the C1' of the ribose to form the product. After dissociation, two additional enzymatic reactions on the tRNA convert PreQ1 to queuine (Q), resulting in the hypermodified nucleoside queuosine (7-(((4,5-cis-dihydroxy-2-cyclopenten-1-yl)amino)methyl)-7-deazaguanosine). This is Queuine tRNA-ribosyltransferase from Ralstonia pickettii (strain 12J).